We begin with the raw amino-acid sequence, 112 residues long: DNA-binding protein TGAM_1196 (112 aa).

Belongs to the PDCD5 family.

This chain is DNA-binding protein TGAM_1196, found in Thermococcus gammatolerans (strain DSM 15229 / JCM 11827 / EJ3).